A 216-amino-acid chain; its full sequence is Minor fimbrial subunit HifD (216 aa).

The signal sequence occupies residues 1-19; it reads MQKTPKKLTALCHQQSTAS. Cysteine 20 carries the N-palmitoyl cysteine lipid modification. Cysteine 20 carries the S-diacylglycerol cysteine lipid modification. The tract at residues 159–180 is disordered; it reads PINVDGSQANSEKAPDTGKEQN.

Belongs to the fimbrial protein family.

The protein resides in the cell membrane. The protein localises to the fimbrium. Its function is as follows. May be a minor structural protein required for pilus biogenesis. The sequence is that of Minor fimbrial subunit HifD (hifD) from Haemophilus influenzae.